A 705-amino-acid polypeptide reads, in one-letter code: Polyribonucleotide nucleotidyltransferase (705 aa).

Positions 487 and 493 each coordinate Mg(2+). Positions 554-613 (PKILTMSINPDKIRDVIGPSGKQINKIIEDTGVKIDIEQDGTIFISSTDESMNQKAKKII) constitute a KH domain. The region spanning 623–691 (GQLYLGKVKR…KQGRVNLSRK (69 aa)) is the S1 motif domain.

It belongs to the polyribonucleotide nucleotidyltransferase family. The cofactor is Mg(2+).

The protein resides in the cytoplasm. It catalyses the reaction RNA(n+1) + phosphate = RNA(n) + a ribonucleoside 5'-diphosphate. Functionally, involved in mRNA degradation. Catalyzes the phosphorolysis of single-stranded polyribonucleotides processively in the 3'- to 5'-direction. This chain is Polyribonucleotide nucleotidyltransferase, found in Bacillus licheniformis (strain ATCC 14580 / DSM 13 / JCM 2505 / CCUG 7422 / NBRC 12200 / NCIMB 9375 / NCTC 10341 / NRRL NRS-1264 / Gibson 46).